The sequence spans 490 residues: Protein nucleotidyltransferase YdiU (490 aa).

Positions 94, 96, 97, 117, 129, 130, 180, and 187 each coordinate ATP. Aspartate 256 functions as the Proton acceptor in the catalytic mechanism. Residues asparagine 257 and aspartate 266 each contribute to the Mg(2+) site. ATP is bound at residue aspartate 266.

It belongs to the SELO family. It depends on Mg(2+) as a cofactor. Requires Mn(2+) as cofactor.

The catalysed reaction is L-seryl-[protein] + ATP = 3-O-(5'-adenylyl)-L-seryl-[protein] + diphosphate. It catalyses the reaction L-threonyl-[protein] + ATP = 3-O-(5'-adenylyl)-L-threonyl-[protein] + diphosphate. It carries out the reaction L-tyrosyl-[protein] + ATP = O-(5'-adenylyl)-L-tyrosyl-[protein] + diphosphate. The enzyme catalyses L-histidyl-[protein] + UTP = N(tele)-(5'-uridylyl)-L-histidyl-[protein] + diphosphate. The catalysed reaction is L-seryl-[protein] + UTP = O-(5'-uridylyl)-L-seryl-[protein] + diphosphate. It catalyses the reaction L-tyrosyl-[protein] + UTP = O-(5'-uridylyl)-L-tyrosyl-[protein] + diphosphate. Nucleotidyltransferase involved in the post-translational modification of proteins. It can catalyze the addition of adenosine monophosphate (AMP) or uridine monophosphate (UMP) to a protein, resulting in modifications known as AMPylation and UMPylation. This Clostridium perfringens (strain 13 / Type A) protein is Protein nucleotidyltransferase YdiU.